The primary structure comprises 377 residues: Putative F-box protein At3g13830 (377 aa).

One can recognise an F-box domain in the interval 6–52 (TTTMSTLPMVLVDEILSRVPITSLRSLRSTCKRWEAQSKTNLVGGKA).

This is Putative F-box protein At3g13830 from Arabidopsis thaliana (Mouse-ear cress).